The following is a 264-amino-acid chain: Inner membrane ABC transporter permease protein YdcV (264 aa).

The Cytoplasmic portion of the chain corresponds to 1-12 (MHSERAPFFLKL). A helical membrane pass occupies residues 13 to 33 (AAWGGVVFLHFPILIIAAYAF). Residues 34–70 (NTEDAAFSFPPQGLTLRWFSVAAQRSDILDAVTLSLK) lie on the Periplasmic side of the membrane. Positions 65–252 (VTLSLKVAAL…MLVTTLPILG (188 aa)) constitute an ABC transmembrane type-1 domain. Residues 71–91 (VAALATLIALVLGTLAAAALW) form a helical membrane-spanning segment. Over 92-100 (RRDFFGKNA) the chain is Cytoplasmic. Residues 101–121 (ISLLLLLPIALPGIVTGLALL) traverse the membrane as a helical segment. Residues 122–128 (TAFKTIN) lie on the Periplasmic side of the membrane. A helical membrane pass occupies residues 129 to 149 (LEPGFFTIVVGHATFCVVVVF). Residues 150–189 (NNVIARFRRTSWSLVEASMDLGANGWQTFRYVVLPNLSSA) lie on the Cytoplasmic side of the membrane. Residues 190-210 (LLAGGMLAFALSFDEIIVTTF) form a helical membrane-spanning segment. Residues 211 to 236 (TAGHERTLPLWLLNQLGRPRDVPVTN) lie on the Periplasmic side of the membrane. A helical transmembrane segment spans residues 237-257 (VVALLVMLVTTLPILGAWWLT). Residues 258 to 264 (REGDNGQ) are Cytoplasmic-facing.

This sequence belongs to the binding-protein-dependent transport system permease family. CysTW subfamily.

The protein localises to the cell inner membrane. Its function is as follows. Probably part of the ABC transporter complex YdcSTUV. Probably responsible for the translocation of the substrate across the membrane. In Shigella flexneri, this protein is Inner membrane ABC transporter permease protein YdcV (ydcV).